The chain runs to 244 residues: Mediator of RNA polymerase II transcription subunit 8 (244 aa).

Positions 6 to 30 (QEQLKTLEQSRQRLVQLTRSLASLI) form a coiled coil.

Belongs to the Mediator complex subunit 8 family. In terms of assembly, component of the Mediator complex.

It is found in the nucleus. In terms of biological role, component of the Mediator complex, a coactivator involved in the regulated transcription of nearly all RNA polymerase II-dependent genes. Mediator functions as a bridge to convey information from gene-specific regulatory proteins to the basal RNA polymerase II transcription machinery. Mediator is recruited to promoters by direct interactions with regulatory proteins and serves as a scaffold for the assembly of a functional preinitiation complex with RNA polymerase II and the general transcription factors. The protein is Mediator of RNA polymerase II transcription subunit 8 (med8) of Aspergillus oryzae (strain ATCC 42149 / RIB 40) (Yellow koji mold).